The chain runs to 622 residues: Putative DEAD-box ATP-dependent RNA helicase 44 (622 aa).

A disordered region spans residues 50-97 (DRRSIVQISRSNSDNDDGNRPRDVKRERHRSHDHDRNRESDREFRERE). The segment covering 66–97 (DGNRPRDVKRERHRSHDHDRNRESDREFRERE) has biased composition (basic and acidic residues). Positions 241 to 436 (IPLGLEQRDV…RKFLRNPVVV (196 aa)) constitute a Helicase ATP-binding domain. 254–261 (SATGSGKT) contacts ATP. A DEAD box motif is present at residues 367–370 (DEAD). Residues 460–606 (RLKKLIDDLG…LVPPELARHE (147 aa)) enclose the Helicase C-terminal domain.

The protein belongs to the DEAD box helicase family. DDX23/PRP28 subfamily.

The enzyme catalyses ATP + H2O = ADP + phosphate + H(+). The protein is Putative DEAD-box ATP-dependent RNA helicase 44 (RH44) of Arabidopsis thaliana (Mouse-ear cress).